Reading from the N-terminus, the 119-residue chain is Ribonuclease P protein component (119 aa).

Belongs to the RnpA family. As to quaternary structure, consists of a catalytic RNA component (M1 or rnpB) and a protein subunit.

The catalysed reaction is Endonucleolytic cleavage of RNA, removing 5'-extranucleotides from tRNA precursor.. In terms of biological role, RNaseP catalyzes the removal of the 5'-leader sequence from pre-tRNA to produce the mature 5'-terminus. It can also cleave other RNA substrates such as 4.5S RNA. The protein component plays an auxiliary but essential role in vivo by binding to the 5'-leader sequence and broadening the substrate specificity of the ribozyme. The sequence is that of Ribonuclease P protein component from Citrobacter koseri (strain ATCC BAA-895 / CDC 4225-83 / SGSC4696).